The sequence spans 372 residues: UDP-N-acetylglucosamine--N-acetylmuramyl-(pentapeptide) pyrophosphoryl-undecaprenol N-acetylglucosamine transferase (372 aa).

Residues 15 to 17 (TGG), Asn-126, Arg-169, Ser-197, and Gln-299 each bind UDP-N-acetyl-alpha-D-glucosamine.

It belongs to the glycosyltransferase 28 family. MurG subfamily.

The protein localises to the cell inner membrane. It catalyses the reaction di-trans,octa-cis-undecaprenyl diphospho-N-acetyl-alpha-D-muramoyl-L-alanyl-D-glutamyl-meso-2,6-diaminopimeloyl-D-alanyl-D-alanine + UDP-N-acetyl-alpha-D-glucosamine = di-trans,octa-cis-undecaprenyl diphospho-[N-acetyl-alpha-D-glucosaminyl-(1-&gt;4)]-N-acetyl-alpha-D-muramoyl-L-alanyl-D-glutamyl-meso-2,6-diaminopimeloyl-D-alanyl-D-alanine + UDP + H(+). Its pathway is cell wall biogenesis; peptidoglycan biosynthesis. Cell wall formation. Catalyzes the transfer of a GlcNAc subunit on undecaprenyl-pyrophosphoryl-MurNAc-pentapeptide (lipid intermediate I) to form undecaprenyl-pyrophosphoryl-MurNAc-(pentapeptide)GlcNAc (lipid intermediate II). In Methylobacterium sp. (strain 4-46), this protein is UDP-N-acetylglucosamine--N-acetylmuramyl-(pentapeptide) pyrophosphoryl-undecaprenol N-acetylglucosamine transferase.